The primary structure comprises 481 residues: Molybdate-anion transporter (481 aa).

12 helical membrane-spanning segments follow: residues 1–21 (MFVT…ALEI), 47–67 (LFLK…PYLY), 80–100 (IAIL…VAGW), 131–151 (FMLI…TTTF), 180–200 (WNYG…EWLG), 201–221 (LGPV…AWFV), 276–296 (VMLL…FVFL), 306–326 (PPLG…STLF), 341–361 (LLCL…FSTV), 371–391 (LLAF…VSFL), 403–423 (AVLA…LLAL), and 443–463 (FAGC…LFTV).

Belongs to the major facilitator superfamily.

The protein resides in the cell membrane. Mediates high-affinity intracellular uptake of the rare oligo-element molybdenum. The chain is Molybdate-anion transporter (mfsd5) from Danio rerio (Zebrafish).